Reading from the N-terminus, the 78-residue chain is Acyl carrier protein (78 aa).

A Carrier domain is found at 2-77 (STIEERVKKI…AAIDYVKAHQ (76 aa)). At Ser37 the chain carries O-(pantetheine 4'-phosphoryl)serine.

Belongs to the acyl carrier protein (ACP) family. In terms of processing, 4'-phosphopantetheine is transferred from CoA to a specific serine of apo-ACP by AcpS. This modification is essential for activity because fatty acids are bound in thioester linkage to the sulfhydryl of the prosthetic group.

The protein localises to the cytoplasm. The protein operates within lipid metabolism; fatty acid biosynthesis. Carrier of the growing fatty acid chain in fatty acid biosynthesis. This chain is Acyl carrier protein, found in Pseudomonas putida (strain ATCC 700007 / DSM 6899 / JCM 31910 / BCRC 17059 / LMG 24140 / F1).